The sequence spans 302 residues: Heme A synthase (302 aa).

At 1–8 (MFRKQNLK) the chain is on the cytoplasmic side. Residues 9–29 (WLGVLATIIMTFVQLGGALVT) form a helical membrane-spanning segment. At 30–67 (KTGSEDGCGSSWPLCNGALLPENLPIQTIIELSHRAVS) the chain is on the extracellular side. A disulfide bond links Cys37 and Cys44. The active site involves Glu60. Position 63 (His63) interacts with heme o. A helical transmembrane segment spans residues 68–88 (AISLIVVLWLVITAWKNIGYI). Residues 89-93 (KEIKP) are Cytoplasmic-facing. The chain crosses the membrane as a helical span at residues 94–114 (LSIISVGFLLVQALVGAAAVI). Over 115–125 (WQQNPYVLALH) the chain is Extracellular. Position 125 (His125) interacts with heme o. Residues 126 to 146 (FGISLISFSSVFLMTLIIFSI) traverse the membrane as a helical segment. The Cytoplasmic segment spans residues 147–161 (DKKYEADILFIHKPL). A helical membrane pass occupies residues 162–182 (RILTWLMAIIVYLTIYTGALV). Over 183-215 (RHTKSSLAYGAWPIPFDDIVPHNAHDWVQFSHR) the chain is Extracellular. Heme b is bound at residue His214. Residues 216–236 (GMALITFIWIMITFIHAIKNY) traverse the membrane as a helical segment. Topologically, residues 237–244 (SDNRTVRY) are cytoplasmic. A helical membrane pass occupies residues 245–265 (GYTASFILVILQVITGALSVI). Over 266–270 (TNVNL) the chain is Extracellular. The chain crosses the membrane as a helical span at residues 271–291 (IIALFHALFITYLFGMIAYFI). Position 276 (His276) interacts with heme b. Topologically, residues 292-302 (LLMLRTTRSQK) are cytoplasmic.

Belongs to the COX15/CtaA family. Type 1 subfamily. Interacts with CtaB. The cofactor is heme b.

It is found in the cell membrane. It carries out the reaction Fe(II)-heme o + 2 A + H2O = Fe(II)-heme a + 2 AH2. Its pathway is porphyrin-containing compound metabolism; heme A biosynthesis; heme A from heme O: step 1/1. Catalyzes the conversion of heme O to heme A by two successive hydroxylations of the methyl group at C8. The first hydroxylation forms heme I, the second hydroxylation results in an unstable dihydroxymethyl group, which spontaneously dehydrates, resulting in the formyl group of heme A. In Staphylococcus epidermidis (strain ATCC 35984 / DSM 28319 / BCRC 17069 / CCUG 31568 / BM 3577 / RP62A), this protein is Heme A synthase.